The chain runs to 347 residues: Large ribosomal subunit protein uL3 (347 aa).

It belongs to the universal ribosomal protein uL3 family. Part of the 50S ribosomal subunit. Forms a cluster with proteins L14 and L24e.

Its function is as follows. One of the primary rRNA binding proteins, it binds directly near the 3'-end of the 23S rRNA, where it nucleates assembly of the 50S subunit. The protein is Large ribosomal subunit protein uL3 of Caldivirga maquilingensis (strain ATCC 700844 / DSM 13496 / JCM 10307 / IC-167).